Reading from the N-terminus, the 542-residue chain is uncharacterized protein (542 aa).

A run of 5 helical transmembrane segments spans residues 4–23 (FVEN…LLLG), 28–47 (FGFR…FSTI), 51–70 (ITVP…YTIG), 91–113 (LALG…LGLA), and 160–182 (YSLT…GGLF). RCK C-terminal domains are found at residues 190 to 272 (AKNA…LLGE) and 274 to 355 (VDGH…IFGD). 5 consecutive transmembrane segments (helical) span residues 363–385 (FNLV…EFPL), 390–412 (ALSL…MGRT), 425–447 (LALR…GAGF), 457–479 (LLII…VIGH), and 519–541 (YTSV…LFLL).

It belongs to the AAE transporter (TC 2.A.81) family.

Its subcellular location is the cell membrane. This is an uncharacterized protein from Corynebacterium efficiens (strain DSM 44549 / YS-314 / AJ 12310 / JCM 11189 / NBRC 100395).